A 551-amino-acid chain; its full sequence is Probable aldehyde dehydrogenase (551 aa).

278-283 provides a ligand contact to NAD(+); it reads GSSRVA. The Proton acceptor role is filled by Glu297. Cys332 functions as the Nucleophile in the catalytic mechanism.

It belongs to the aldehyde dehydrogenase family. In uninfected plants, highest levels found in stems. In plants infected with the flax rust, highest levels in leaves. Higher levels of expression in infected leaves than uninfected stems.

It carries out the reaction an aldehyde + NAD(+) + H2O = a carboxylate + NADH + 2 H(+). In terms of biological role, could be involved in facilitating the biotrophic relationship between the plant and the rust fungus. This is Probable aldehyde dehydrogenase (FIS1) from Linum usitatissimum (Flax).